The following is a 460-amino-acid chain: Inactive 7-epi-sesquithujene synthase (460 aa).

Mg(2+)-binding residues include D308 and D312. 2 residues coordinate substrate: D308 and D312. The DDXXD motif motif lies at 308–312; sequence DDMFD.

It belongs to the terpene synthase family. Monomer. The cofactor is Mg(2+). It depends on Mn(2+) as a cofactor.

The protein localises to the cytoplasm. Its pathway is secondary metabolite biosynthesis; terpenoid biosynthesis. Non-functional sesquiterpene synthase due to a frameshift removing part of the catalytic site. This is Inactive 7-epi-sesquithujene synthase from Zea mays (Maize).